Reading from the N-terminus, the 388-residue chain is 4-hydroxy-3-methylbut-2-en-1-yl diphosphate synthase (flavodoxin) (388 aa).

[4Fe-4S] cluster-binding residues include Cys-281, Cys-284, Cys-316, and Glu-323.

The protein belongs to the IspG family. [4Fe-4S] cluster serves as cofactor.

It catalyses the reaction (2E)-4-hydroxy-3-methylbut-2-enyl diphosphate + oxidized [flavodoxin] + H2O + 2 H(+) = 2-C-methyl-D-erythritol 2,4-cyclic diphosphate + reduced [flavodoxin]. It functions in the pathway isoprenoid biosynthesis; isopentenyl diphosphate biosynthesis via DXP pathway; isopentenyl diphosphate from 1-deoxy-D-xylulose 5-phosphate: step 5/6. Converts 2C-methyl-D-erythritol 2,4-cyclodiphosphate (ME-2,4cPP) into 1-hydroxy-2-methyl-2-(E)-butenyl 4-diphosphate. This Pseudarthrobacter chlorophenolicus (strain ATCC 700700 / DSM 12829 / CIP 107037 / JCM 12360 / KCTC 9906 / NCIMB 13794 / A6) (Arthrobacter chlorophenolicus) protein is 4-hydroxy-3-methylbut-2-en-1-yl diphosphate synthase (flavodoxin).